The chain runs to 429 residues: Probable beta-1,3-galactosyl-O-glycosyl-glycoprotein beta-1,6-N-acetylglucosaminyltransferase 7 (429 aa).

Over 1 to 8 the chain is Cytoplasmic; that stretch reads MSQLRATK. Residues 9-25 traverse the membrane as a helical; Signal-anchor for type II membrane protein segment; that stretch reads PGILVCAAIGIFVFLYL. Topologically, residues 26–429 are extracellular; sequence RNPTSEDPEE…ESHLNRRLNP (404 aa). Cystine bridges form between Cys-53–Cys-205, Cys-139–Cys-354, Cys-160–Cys-187, and Cys-363–Cys-394. The N-linked (GlcNAc...) asparagine glycan is linked to Asn-87. An N-linked (GlcNAc...) asparagine glycan is attached at Asn-272.

The protein belongs to the glycosyltransferase 14 family.

It is found in the golgi apparatus membrane. Its pathway is protein modification; protein glycosylation. Probable glycosyltransferase. This is Probable beta-1,3-galactosyl-O-glycosyl-glycoprotein beta-1,6-N-acetylglucosaminyltransferase 7 from Sus scrofa (Pig).